Reading from the N-terminus, the 319-residue chain is Taste receptor type 2 member 14 (319 aa).

The Extracellular segment spans residues 1–7 (MDGVIKS). Residues 8-28 (IFTFILIVEFIIGNLGNSFIV) traverse the membrane as a helical segment. Residues 29 to 55 (LVNCIDWVKRRKISLVDQILIALAISR) lie on the Cytoplasmic side of the membrane. The helical transmembrane segment at 56-76 (ISLVWSIFGSWCVSVFFPALF) threads the bilayer. Residues 77 to 87 (ATEKLLRMLTN) lie on the Extracellular side of the membrane. The cholesterol site is built by T86 and W89. A helical membrane pass occupies residues 88–108 (IWTVTNHFSVWLATILGTFYF). At 109-129 (LKIANFSNSIFLYLKWRVKKV) the chain is on the cytoplasmic side. The chain crosses the membrane as a helical span at residues 130–150 (VLVLLLVTLGLLFLNILLINI). Over 151–184 (HINASINGYRGNMTCSSASCNFIRFSRAIALTST) the chain is Extracellular. N-linked (GlcNAc...) asparagine glycosylation is found at N153 and N162. Residue A180 coordinates cholesterol. A helical transmembrane segment spans residues 185 to 205 (VFVLIPFTLSLATSLLLSFSL). The Cytoplasmic segment spans residues 206–233 (WKHHKKMQHTVKGYRDVSTKAHRGVMQT). A helical membrane pass occupies residues 234–254 (VITFLLLYAVFLLTFFISIWA). At 255-263 (SVRLKENQI) the chain is on the extracellular side. Residues 264-284 (IILSEMMGLAYPSGHSCVLIL) traverse the membrane as a helical segment. Cholesterol contacts are provided by S267 and M270. The Cytoplasmic portion of the chain corresponds to 285–319 (GNKKLRQASLSVLWWLRYRFKHGEPSGHKEFRESS).

Belongs to the G-protein coupled receptor T2R family. As to quaternary structure, core component of the TAS2R14-GNAI1 complex, consisting of TAS2R14, GNAI1, GNB1 and GNG2; within the complex interacts with GNAI1. Core component of the TAS2R14-GNAT3 complex, consisting of TAS2R14, GNAT3, GNB1 and GNG2; within the complex interacts with GNAT3. Core component of the TAS2R14-GNAS2 complex, consisting of TAS2R14, GNAS2, GNB1 and GNG2; within the complex interacts with GNAS2.

Its subcellular location is the membrane. It carries out the reaction Ca(2+)(in) = Ca(2+)(out). It catalyses the reaction 3',5'-cyclic AMP(in) = 3',5'-cyclic AMP(out). Basal activity is enhanced by binding to bitter tastants, such as flufenamic acid and aristolochic acid. Regulated by cholesterol in a concentration-dependent manner. Its function is as follows. Gustducin-linked G-protein coupled receptor that plays a role in the perception of bitterness. The activity of this receptor stimulates GNAT3, activating the gustducin G-protein pathway. Likely plays a role in sensing the chemical composition of the gastrointestinal content and other extra-oral tissues via the inhibitory G-protein pathways. This Macaca mulatta (Rhesus macaque) protein is Taste receptor type 2 member 14 (TAS2R14).